Reading from the N-terminus, the 196-residue chain is Adenylyl-sulfate kinase (196 aa).

ATP is bound at residue 31–38 (GLSGAGKS). The active-site Phosphoserine intermediate is serine 105.

This sequence belongs to the APS kinase family.

It catalyses the reaction adenosine 5'-phosphosulfate + ATP = 3'-phosphoadenylyl sulfate + ADP + H(+). Its pathway is sulfur metabolism; hydrogen sulfide biosynthesis; sulfite from sulfate: step 2/3. Functionally, catalyzes the synthesis of activated sulfate. This Aeromonas salmonicida (strain A449) protein is Adenylyl-sulfate kinase.